The following is a 239-amino-acid chain: Proteasome activator complex subunit 2 (239 aa).

Residue Ala2 is modified to N-acetylalanine. Phosphoserine is present on Ser10. Positions 65–86 (DIPIPDPPPKDDEMETDKQEKK) are disordered. Over residues 72-86 (PPKDDEMETDKQEKK) the composition is skewed to basic and acidic residues.

Belongs to the PA28 family. In terms of assembly, heterodimer of PSME1 and PSME2, which forms a hexameric ring.

Implicated in immunoproteasome assembly and required for efficient antigen processing. The PA28 activator complex enhances the generation of class I binding peptides by altering the cleavage pattern of the proteasome. The sequence is that of Proteasome activator complex subunit 2 (PSME2) from Bos taurus (Bovine).